The following is a 1577-amino-acid chain: Disco-interacting protein 2 homolog B-A (1577 aa).

Residues 7 to 124 (DLAALPKEVR…PMPTKRRSAF (118 aa)) enclose the DMAP1-binding domain. Disordered stretches follow at residues 109–148 (EEKM…GSLR), 173–204 (VQGS…QGQT), 217–239 (DTNS…DRNS), and 253–273 (SRGQ…AHSR). Positions 124–140 (FVQSPAENCTPPDTSSA) are enriched in polar residues. Positions 176–187 (SSTSSSASSTLS) are enriched in low complexity. Over residues 217–236 (DTNSSSGSVPPDVTSTAPQD) the composition is skewed to polar residues.

It belongs to the DIP2 family.

The protein localises to the cell projection. It is found in the dendrite. The protein resides in the axon. It localises to the perikaryon. Negatively regulates axonal outgrowth and is essential for normal synaptic transmission. Not required for regulation of axon polarity. Promotes acetylation of alpha-tubulin. In Danio rerio (Zebrafish), this protein is Disco-interacting protein 2 homolog B-A (dip2ba).